Here is a 723-residue protein sequence, read N- to C-terminus: Catalase-peroxidase (723 aa).

The signal sequence occupies residues 1–29 (MDGNDLVENKCPVMHGGITVAGHSNTAWW). Residues 97–225 (WHSAGSYRLA…LAAVQMGLIY (129 aa)) constitute a cross-link (tryptophyl-tyrosyl-methioninium (Trp-Tyr) (with M-251)). Residue His-98 is the Proton acceptor of the active site. The tryptophyl-tyrosyl-methioninium (Tyr-Met) (with W-97) cross-link spans 225–251 (YVNPEGVNGKSDPLKSAAQVRETFARM). Residue His-266 coordinates heme b.

Belongs to the peroxidase family. Peroxidase/catalase subfamily. Homodimer or homotetramer. It depends on heme b as a cofactor. In terms of processing, formation of the three residue Trp-Tyr-Met cross-link is important for the catalase, but not the peroxidase activity of the enzyme.

The catalysed reaction is H2O2 + AH2 = A + 2 H2O. It catalyses the reaction 2 H2O2 = O2 + 2 H2O. In terms of biological role, bifunctional enzyme with both catalase and broad-spectrum peroxidase activity. This is Catalase-peroxidase from Hyphomonas neptunium (strain ATCC 15444).